Here is a 273-residue protein sequence, read N- to C-terminus: Exosome complex component Rrp42 (273 aa).

It belongs to the RNase PH family. Rrp42 subfamily. Component of the archaeal exosome complex. Forms a hexameric ring-like arrangement composed of 3 Rrp41-Rrp42 heterodimers. The hexameric ring associates with a trimer of Rrp4 and/or Csl4 subunits.

The protein resides in the cytoplasm. Functionally, non-catalytic component of the exosome, which is a complex involved in RNA degradation. Contributes to the structuring of the Rrp41 active site. The polypeptide is Exosome complex component Rrp42 (Thermococcus gammatolerans (strain DSM 15229 / JCM 11827 / EJ3)).